A 102-amino-acid chain; its full sequence is MIIKLSLINIEFLKRMRYRDFEKKRKILECLKKNQNQAKQLRNHLWQLKVSKNNKSRLTKQVDRCCLTGRTKAYIKNFNLSRHAANLHAFEGLLQNTKTKSW.

Belongs to the universal ribosomal protein uS14 family.

It localises to the mitochondrion. This is Small ribosomal subunit protein uS14m (RPS14) from Paramecium tetraurelia.